A 295-amino-acid chain; its full sequence is NAD kinase (295 aa).

The active-site Proton acceptor is D72. NAD(+) is bound by residues 72-73 (DG), 146-147 (ND), R157, K174, D176, 187-192 (TAYALS), and Q247.

It belongs to the NAD kinase family. Requires a divalent metal cation as cofactor.

It localises to the cytoplasm. The enzyme catalyses NAD(+) + ATP = ADP + NADP(+) + H(+). Its function is as follows. Involved in the regulation of the intracellular balance of NAD and NADP, and is a key enzyme in the biosynthesis of NADP. Catalyzes specifically the phosphorylation on 2'-hydroxyl of the adenosine moiety of NAD to yield NADP. In Ectopseudomonas mendocina (strain ymp) (Pseudomonas mendocina), this protein is NAD kinase.